The following is a 380-amino-acid chain: Putative 8-amino-7-oxononanoate synthase (380 aa).

Arg-18 is a substrate binding site. 106–107 (GY) is a binding site for pyridoxal 5'-phosphate. His-131 contacts substrate. Residues Ser-179, 205–208 (DEAH), and 236–239 (TFGK) each bind pyridoxal 5'-phosphate. Lys-239 is modified (N6-(pyridoxal phosphate)lysine). Residue Thr-352 participates in substrate binding.

It belongs to the class-II pyridoxal-phosphate-dependent aminotransferase family. BioF subfamily. In terms of assembly, homodimer. Pyridoxal 5'-phosphate is required as a cofactor.

It catalyses the reaction 6-carboxyhexanoyl-[ACP] + L-alanine + H(+) = (8S)-8-amino-7-oxononanoate + holo-[ACP] + CO2. The protein operates within cofactor biosynthesis; biotin biosynthesis. Its function is as follows. Catalyzes the decarboxylative condensation of pimeloyl-[acyl-carrier protein] and L-alanine to produce 8-amino-7-oxononanoate (AON), [acyl-carrier protein], and carbon dioxide. This Neisseria meningitidis serogroup B (strain ATCC BAA-335 / MC58) protein is Putative 8-amino-7-oxononanoate synthase (bioF).